Consider the following 489-residue polypeptide: Inositol-pentakisphosphate 2-kinase (489 aa).

The EXKPK motif motif lies at 136-140 (EIKPK).

This sequence belongs to the IPK1 type 2 family.

The protein localises to the cytoplasm. Its subcellular location is the nucleus. It carries out the reaction 1D-myo-inositol 1,3,4,5,6-pentakisphosphate + ATP = 1D-myo-inositol hexakisphosphate + ADP + H(+). Phosphorylates Ins(1,3,4,5,6)P5 at position 2 to form Ins(1,2,3,4,5,6)P6 (InsP6 or phytate). InsP6 is involved in many processes such as mRNA export, non-homologous end-joining, endocytosis, ion channel regulation. It also protects cells from TNF-alpha-induced apoptosis. This Rattus norvegicus (Rat) protein is Inositol-pentakisphosphate 2-kinase (Ippk).